The chain runs to 365 residues: ADP-ribosylhydrolase ARH3 (365 aa).

Mg(2+)-binding residues include Glu42, Thr77, Asp78, and Asp79. Asp78 contributes to the substrate binding site. Substrate is bound by residues Lys147 to Gly153, His183, Leu236, and Ile272. Mg(2+) contacts are provided by Asp315, Asp317, and Thr318.

Belongs to the ADP-ribosylglycohydrolase family. In terms of assembly, monomer. The cofactor is Mg(2+).

Its subcellular location is the nucleus. It localises to the cytoplasm. It is found in the chromosome. The protein localises to the mitochondrion matrix. The catalysed reaction is [(1''-&gt;2')-ADP-alpha-D-ribose](n) + H2O = [(1''-&gt;2')-ADP-alpha-D-ribose](n-1) + ADP-D-ribose. It carries out the reaction 1''-O-acetyl-ADP-alpha-D-ribose + H2O = ADP-D-ribose + acetate + H(+). The enzyme catalyses O-(ADP-D-ribosyl)-L-seryl-[protein] + H2O = ADP-D-ribose + L-seryl-[protein]. It catalyses the reaction alpha-NAD(+) + H2O = ADP-D-ribose + nicotinamide + H(+). Its activity is regulated as follows. The protein undergoes a dramatic conformational switch from closed to open states upon substrate-binding, which enables specific substrate recognition for the 1''-O-linkage. The glutamate flap (Glu-42) blocks substrate entrance to Mg(2+) in the unliganded closed state. In presence of substrate, Glu-42 is ejected from the active site: this closed-to-open transition significantly widens the substrate-binding channel and precisely positions the scissile 1''-O-linkage for cleavage while securing tightly 2'- and 3'-hydroxyls of ADP-ribose. Its function is as follows. ADP-ribosylhydrolase that preferentially hydrolyzes the scissile alpha-O-linkage attached to the anomeric C1'' position of ADP-ribose and acts on different substrates, such as proteins ADP-ribosylated on serine and threonine, free poly(ADP-ribose) and O-acetyl-ADP-D-ribose. Specifically acts as a serine mono-ADP-ribosylhydrolase by mediating the removal of mono-ADP-ribose attached to serine residues on proteins, thereby playing a key role in DNA damage response. Serine ADP-ribosylation of proteins constitutes the primary form of ADP-ribosylation of proteins in response to DNA damage. Does not hydrolyze ADP-ribosyl-arginine, -cysteine, -diphthamide, or -asparagine bonds. Also able to degrade protein free poly(ADP-ribose), which is synthesized in response to DNA damage: free poly(ADP-ribose) acts as a potent cell death signal and its degradation by ADPRHL2 protects cells from poly(ADP-ribose)-dependent cell death, a process named parthanatos. Also hydrolyzes free poly(ADP-ribose) in mitochondria. Specifically digests O-acetyl-ADP-D-ribose, a product of deacetylation reactions catalyzed by sirtuins. Specifically degrades 1''-O-acetyl-ADP-D-ribose isomer, rather than 2''-O-acetyl-ADP-D-ribose or 3''-O-acetyl-ADP-D-ribose isomers. The protein is ADP-ribosylhydrolase ARH3 (ADPRS) of Bos taurus (Bovine).